A 419-amino-acid polypeptide reads, in one-letter code: Histidine--tRNA ligase (419 aa).

This sequence belongs to the class-II aminoacyl-tRNA synthetase family. As to quaternary structure, homodimer.

It localises to the cytoplasm. It catalyses the reaction tRNA(His) + L-histidine + ATP = L-histidyl-tRNA(His) + AMP + diphosphate + H(+). The chain is Histidine--tRNA ligase from Trichlorobacter lovleyi (strain ATCC BAA-1151 / DSM 17278 / SZ) (Geobacter lovleyi).